Consider the following 43-residue polypeptide: Potassium channel toxin gamma-KTx 4.13 (43 aa).

Disulfide bonds link C5-C23, C11-C34, C20-C39, and C24-C41.

The protein belongs to the ergtoxin family. Gamma-KTx 4 subfamily. As to expression, expressed by the venom gland.

The protein localises to the secreted. Its function is as follows. Reversibly blocks Kv11/ERG potassium channels. This chain is Potassium channel toxin gamma-KTx 4.13, found in Centruroides noxius (Mexican scorpion).